The chain runs to 541 residues: Putative transferase YhbX (541 aa).

Over 1–60 the chain is Periplasmic; it reads MTVFNKFARSFKSHWLLYLSVIVFGITNLVASSGAHMVQRLLFFVLTILVVKRISSLPLR. The helical transmembrane segment at 61–81 threads the bilayer; the sequence is LLVAAPFVLLTAADMSISLYS. Topologically, residues 82–110 are cytoplasmic; sequence WCTFGTTFNDGFAISVLQSDPDEVAKMLG. Residues 111–131 traverse the membrane as a helical segment; it reads MYSPYLCAFAFLSLLFLAVII. Topologically, residues 132–141 are periplasmic; sequence KYDVSLPTKK. Residues 142–162 form a helical membrane-spanning segment; it reads VTGILLLIVISGSLFSACQFA. Residues 163–264 are Cytoplasmic-facing; sequence YKDAKNKNAF…RKQIKLFNQA (102 aa). The helical transmembrane segment at 265 to 285 threads the bilayer; sequence ISGAPYTALSVPLSLTADSVL. Topologically, residues 286 to 541 are periplasmic; the sequence is SHDIHNYPDN…QGNPTPEGQG (256 aa).

It belongs to the phosphoethanolamine transferase family.

The protein localises to the cell inner membrane. In terms of biological role, there are several lipid A forms in this strain, including a phosphoethanolamine (1-O-P-pEtN) form; overexpression of this gene does not lead to higher levels of the 1-O-P-pEtN form of lipid A. This is Putative transferase YhbX (yhbX) from Escherichia coli O157:H7.